Reading from the N-terminus, the 183-residue chain is Capsid protein (183 aa).

Positions 136-183 are disordered; sequence NAPILSTLPETTVVRRRGRSPRRRTPSPRRRRSQSPRRRRSQSRESQC. Positions 149–176 are enriched in basic residues; the sequence is VRRRGRSPRRRTPSPRRRRSQSPRRRRS. Residues Ser-155, Ser-162, and Ser-170 each carry the phosphoserine; by host modification. Residues 155 to 161 form a 1; half-length repeat; that stretch reads SPRRRTP. The tract at residues 155 to 177 is 3 X 8 AA repeats of S-P-R-R-R-[PR]-S-Q; it reads SPRRRTPSPRRRRSQSPRRRRSQ. The Bipartite nuclear localization signal motif lies at 158–175; sequence RRTPSPRRRRSQSPRRRR. 2 repeat units span residues 162-169 and 170-177. The RNA binding stretch occupies residues 177 to 183; sequence QSRESQC.

This sequence belongs to the orthohepadnavirus core antigen family. In terms of assembly, homodimerizes, then multimerizes. Interacts with cytosol exposed regions of viral L glycoprotein present in the reticulum-to-Golgi compartment. Interacts with human FLNB. Phosphorylated form interacts with host importin alpha; this interaction depends on the exposure of the NLS, which itself depends upon genome maturation and/or phosphorylation of the capsid protein. Interacts with host NUP153. Post-translationally, phosphorylated by host SRPK1, SRPK2, and maybe protein kinase C or GAPDH. Phosphorylation is critical for pregenomic RNA packaging. Protein kinase C phosphorylation is stimulated by HBx protein and may play a role in transport of the viral genome to the nucleus at the late step during the viral replication cycle.

It is found in the virion. It localises to the host cytoplasm. Functionally, self assembles to form an icosahedral capsid. Most capsids appear to be large particles with an icosahedral symmetry of T=4 and consist of 240 copies of capsid protein, though a fraction forms smaller T=3 particles consisting of 180 capsid proteins. Entering capsids are transported along microtubules to the nucleus. Phosphorylation of the capsid is thought to induce exposure of nuclear localization signal in the C-terminal portion of the capsid protein that allows binding to the nuclear pore complex via the importin (karyopherin-) alpha and beta. Capsids are imported in intact form through the nuclear pore into the nuclear basket, where it probably binds NUP153. Only capsids that contain the mature viral genome can release the viral DNA and capsid protein into the nucleoplasm. Immature capsids get stuck in the basket. Capsids encapsulate the pre-genomic RNA and the P protein. Pre-genomic RNA is reverse-transcribed into DNA while the capsid is still in the cytoplasm. The capsid can then either be directed to the nucleus, providing more genomes for transcription, or bud through the endoplasmic reticulum to provide new virions. The sequence is that of Capsid protein from Homo sapiens (Human).